A 396-amino-acid polypeptide reads, in one-letter code: Succinyl-CoA:mesaconate CoA-transferase (396 aa).

D175 (nucleophile) is an active-site residue.

This sequence belongs to the CoA-transferase III family.

It carries out the reaction mesaconate + succinyl-CoA = 2-methylfumaryl-CoA + succinate. Its function is as follows. Involved in the methylaspartate cycle. Catalyzes the transfer of the CoA moiety from succinyl-CoA to mesaconate to generate mesaconyl-CoA (2-methylfumaryl-CoA) and succinate. The chain is Succinyl-CoA:mesaconate CoA-transferase from Haloarcula marismortui (strain ATCC 43049 / DSM 3752 / JCM 8966 / VKM B-1809) (Halobacterium marismortui).